The chain runs to 353 residues: Methylthioribose-1-phosphate isomerase (353 aa).

Substrate-binding positions include 51–53 (RGA), R94, and Q203. D244 acts as the Proton donor in catalysis. A substrate-binding site is contributed by 254 to 255 (NK).

The protein belongs to the eIF-2B alpha/beta/delta subunits family. MtnA subfamily.

The catalysed reaction is 5-(methylsulfanyl)-alpha-D-ribose 1-phosphate = 5-(methylsulfanyl)-D-ribulose 1-phosphate. The protein operates within amino-acid biosynthesis; L-methionine biosynthesis via salvage pathway; L-methionine from S-methyl-5-thio-alpha-D-ribose 1-phosphate: step 1/6. Catalyzes the interconversion of methylthioribose-1-phosphate (MTR-1-P) into methylthioribulose-1-phosphate (MTRu-1-P). The sequence is that of Methylthioribose-1-phosphate isomerase from Trichodesmium erythraeum (strain IMS101).